The chain runs to 366 residues: Holliday junction branch migration complex subunit RuvB (366 aa).

The segment at methionine 1–aspartate 48 is disordered. A large ATPase domain (RuvB-L) region spans residues glycine 21–tyrosine 212. Residues leucine 51, arginine 52, glycine 93, lysine 96, threonine 97, threonine 98, glutamate 159–phenylalanine 161, arginine 202, tyrosine 212, and arginine 249 each bind ATP. Threonine 97 serves as a coordination point for Mg(2+). The small ATPAse domain (RuvB-S) stretch occupies residues threonine 213 to glycine 283. The tract at residues histidine 286–serine 366 is head domain (RuvB-H). DNA is bound by residues arginine 341, arginine 343, and arginine 346.

The protein belongs to the RuvB family. Homohexamer. Forms an RuvA(8)-RuvB(12)-Holliday junction (HJ) complex. HJ DNA is sandwiched between 2 RuvA tetramers; dsDNA enters through RuvA and exits via RuvB. An RuvB hexamer assembles on each DNA strand where it exits the tetramer. Each RuvB hexamer is contacted by two RuvA subunits (via domain III) on 2 adjacent RuvB subunits; this complex drives branch migration. In the full resolvosome a probable DNA-RuvA(4)-RuvB(12)-RuvC(2) complex forms which resolves the HJ.

Its subcellular location is the cytoplasm. It carries out the reaction ATP + H2O = ADP + phosphate + H(+). The RuvA-RuvB-RuvC complex processes Holliday junction (HJ) DNA during genetic recombination and DNA repair, while the RuvA-RuvB complex plays an important role in the rescue of blocked DNA replication forks via replication fork reversal (RFR). RuvA specifically binds to HJ cruciform DNA, conferring on it an open structure. The RuvB hexamer acts as an ATP-dependent pump, pulling dsDNA into and through the RuvAB complex. RuvB forms 2 homohexamers on either side of HJ DNA bound by 1 or 2 RuvA tetramers; 4 subunits per hexamer contact DNA at a time. Coordinated motions by a converter formed by DNA-disengaged RuvB subunits stimulates ATP hydrolysis and nucleotide exchange. Immobilization of the converter enables RuvB to convert the ATP-contained energy into a lever motion, pulling 2 nucleotides of DNA out of the RuvA tetramer per ATP hydrolyzed, thus driving DNA branch migration. The RuvB motors rotate together with the DNA substrate, which together with the progressing nucleotide cycle form the mechanistic basis for DNA recombination by continuous HJ branch migration. Branch migration allows RuvC to scan DNA until it finds its consensus sequence, where it cleaves and resolves cruciform DNA. This chain is Holliday junction branch migration complex subunit RuvB, found in Rhodopirellula baltica (strain DSM 10527 / NCIMB 13988 / SH1).